A 399-amino-acid chain; its full sequence is ATP-dependent RNA helicase FAL1 (399 aa).

A Q motif motif is present at residues 23-51; the sequence is PTFESMNLKDDLLRGIYGYGFEAPSAIQS. A Helicase ATP-binding domain is found at 54 to 227; that stretch reads ITQIISGTDV…KKFMSDPVKI (174 aa). 67 to 74 serves as a coordination point for ATP; sequence AQSGTGKT. The DEAD box motif lies at 173 to 176; it reads DEAD. Positions 238 to 399 constitute a Helicase C-terminal domain; the sequence is GIKQYYVNVE…PVPADLSTIS (162 aa).

The protein belongs to the DEAD box helicase family. DDX48/FAL1 subfamily.

The protein localises to the nucleus. It localises to the nucleolus. It carries out the reaction ATP + H2O = ADP + phosphate + H(+). Its function is as follows. ATP-dependent RNA helicase involved in 40S ribosomal subunit biogenesis. Required for the processing and cleavage of 35S pre-rRNA at sites A0, A1, and A2, leading to mature 18S rRNA. The protein is ATP-dependent RNA helicase FAL1 (FAL1) of Vanderwaltozyma polyspora (strain ATCC 22028 / DSM 70294 / BCRC 21397 / CBS 2163 / NBRC 10782 / NRRL Y-8283 / UCD 57-17) (Kluyveromyces polysporus).